The primary structure comprises 164 residues: FMN reductase (NADH) RutF (164 aa).

It belongs to the non-flavoprotein flavin reductase family. RutF subfamily.

It catalyses the reaction FMNH2 + NAD(+) = FMN + NADH + 2 H(+). Catalyzes the reduction of FMN to FMNH2 which is used to reduce pyrimidine by RutA via the Rut pathway. This is FMN reductase (NADH) RutF from Escherichia coli (strain K12 / MC4100 / BW2952).